A 64-amino-acid polypeptide reads, in one-letter code: Probable cytochrome c oxidase subunit 5C-3 (64 aa).

Residues 15 to 34 (SVVKELVIGLTLGLAAGGLW) traverse the membrane as a helical segment.

It belongs to the cytochrome c oxidase subunit 5C family.

The protein localises to the mitochondrion inner membrane. Its function is as follows. This protein is one of the nuclear-coded polypeptide chains of cytochrome c oxidase, the terminal oxidase in mitochondrial electron transport. This chain is Probable cytochrome c oxidase subunit 5C-3, found in Arabidopsis thaliana (Mouse-ear cress).